A 201-amino-acid polypeptide reads, in one-letter code: uncharacterized protein (201 aa).

This sequence belongs to the methyltransferase superfamily.

This is an uncharacterized protein from Bacillus subtilis (strain 168).